Consider the following 1979-residue polypeptide: Repetitive organellar protein (1979 aa).

The span at 1–12 (MVFTFKNKKKKK) shows a compositional bias: basic residues. 2 disordered regions span residues 1–42 (MVFT…DSWY) and 54–116 (TKYK…NNYS). Basic and acidic residues-rich tracts occupy residues 13-24 (EASSDKVSKESF) and 31-42 (NNEKREKSDSWY). The span at 68 to 114 (EDIINNNNNNNNDNNNDNNNDNNNDNNNDNNNDNNNENNNDNNNFNN) shows a compositional bias: low complexity. Coiled coils occupy residues 127 to 366 (DNEL…LKDE), 412 to 666 (LKVY…EMEL), 693 to 876 (LKES…KKKQ), 992 to 1094 (KKKH…YKTI), 1126 to 1307 (VDKI…MNIK), and 1398 to 1467 (IANY…LTSQ).

It is found in the host cell membrane. The chain is Repetitive organellar protein from Plasmodium falciparum (isolate 3D7).